The primary structure comprises 130 residues: Small ribosomal subunit protein uS9 (130 aa).

This sequence belongs to the universal ribosomal protein uS9 family.

The protein is Small ribosomal subunit protein uS9 of Shigella sonnei (strain Ss046).